The chain runs to 481 residues: Surface lipoprotein assembly modifier 1 (481 aa).

A signal peptide spans 1-23 (MSIQTKFILFLSSSLFLTPYSVA). The segment at 25–192 (EKSPQPHDGR…QYLSALNQRD (168 aa)) is N-terminal domain. The interval 193–481 (QWKIQGGFSF…RIYVEISKTF (289 aa)) is C-terminal probable beta barrel. Transmembrane regions (beta stranded) follow at residues 194–204 (WKIQGGFSFLN), 233–243 (SYFGNAEKKWS), 248–258 (HFTKLSLEGSG), 271–281 (NARAGVGLGYQ), 285–295 (FELSLMPFTEK), 315–325 (SGARLDLSNWL), 329–338 (WQISTALEYG), 353–363 (YLASATLLYLA), 368–377 (YWFGGADYNR), 390–400 (KNVRLGWGQEW), 405–414 (STRLILNYAR), 432–441 (YASVLTIWHR), 448–458 (ITPKLSWSYQK), and 471–481 (NRIYVEISKTF).

This sequence belongs to the Slam family.

It localises to the cell outer membrane. Required for correct export to the cell surface of some cell outer membrane lipoproteins. This is Surface lipoprotein assembly modifier 1 from Haemophilus influenzae (strain ATCC 51907 / DSM 11121 / KW20 / Rd).